A 224-amino-acid polypeptide reads, in one-letter code: Peroxiredoxin-6 (224 aa).

In terms of domain architecture, Thioredoxin spans 5–169 (LLLGDEAPNF…ILRVIISLQL (165 aa)). Residues 31 to 40 (DSWGILFSHP) are required and sufficient for targeting to lysosomes and lamellar bodies. Thr44 is modified (phosphothreonine). Cys47 functions as the Cysteine sulfenic acid (-SOH) intermediate; for peroxidase activity in the catalytic mechanism. Lys63 bears the N6-acetyllysine mark. Position 89 is a phosphotyrosine (Tyr89). The active-site For phospholipase activity is the Asp140. Thr177 carries the post-translational modification Phosphothreonine; by MAPK. Lys209 bears the N6-acetyllysine; alternate mark. Lys209 is modified (N6-succinyllysine; alternate).

This sequence belongs to the peroxiredoxin family. Prx6 subfamily. In terms of assembly, homodimer. Interacts with GSTP1; mediates PRDX6 glutathionylation and regeneration. Interacts with APEX1. Interacts with STH. May interact with FAM168B. May interact with HTR2A. Requires Does not need Ca(2+) as cofactor. as cofactor. In terms of processing, irreversibly inactivated by overoxidation of Cys-47 to sulfinic acid (Cys-SO(2)H) and sulfonic acid (Cys-SO(3)H) forms upon oxidative stress. Post-translationally, phosphorylation at Thr-177 by MAP kinases increases the phospholipase activity of the enzyme. The phosphorylated form exhibits a greater lysophosphatidylcholine acyltransferase activity compared to the non-phosphorylated form.

It localises to the cytoplasm. It is found in the lysosome. The enzyme catalyses a hydroperoxide + 2 glutathione = an alcohol + glutathione disulfide + H2O. It carries out the reaction a 1,2-diacyl-sn-glycero-3-phosphocholine + H2O = a 1-acyl-sn-glycero-3-phosphocholine + a fatty acid + H(+). It catalyses the reaction a 1-acyl-sn-glycero-3-phosphocholine + an acyl-CoA = a 1,2-diacyl-sn-glycero-3-phosphocholine + CoA. The catalysed reaction is 1-hexadecanoyl-sn-glycero-3-phosphocholine + hexadecanoyl-CoA = 1,2-dihexadecanoyl-sn-glycero-3-phosphocholine + CoA. The enzyme catalyses 1,2-dihexadecanoyl-sn-glycero-3-phosphocholine + H2O = 1-hexadecanoyl-sn-glycero-3-phosphocholine + hexadecanoate + H(+). Its function is as follows. Thiol-specific peroxidase that catalyzes the reduction of hydrogen peroxide and organic hydroperoxides to water and alcohols, respectively. Can reduce H(2)O(2) and short chain organic, fatty acid, and phospholipid hydroperoxides. Also has phospholipase activity, and can therefore either reduce the oxidized sn-2 fatty acyl group of phospholipids (peroxidase activity) or hydrolyze the sn-2 ester bond of phospholipids (phospholipase activity). These activities are dependent on binding to phospholipids at acidic pH and to oxidized phospholipds at cytosolic pH. Plays a role in cell protection against oxidative stress by detoxifying peroxides and in phospholipid homeostasis. Exhibits acyl-CoA-dependent lysophospholipid acyltransferase which mediates the conversion of lysophosphatidylcholine (1-acyl-sn-glycero-3-phosphocholine or LPC) into phosphatidylcholine (1,2-diacyl-sn-glycero-3-phosphocholine or PC). Shows a clear preference for LPC as the lysophospholipid and for palmitoyl CoA as the fatty acyl substrate. This is Peroxiredoxin-6 (PRDX6) from Bos taurus (Bovine).